Consider the following 817-residue polypeptide: DNA ligase (817 aa).

NAD(+) is bound by residues 45 to 49 (DVEYD), 94 to 95 (SI), and Glu-131. Lys-133 (N6-AMP-lysine intermediate) is an active-site residue. NAD(+)-binding residues include Arg-154, Glu-193, Lys-311, and Lys-335. Zn(2+) is bound by residues Cys-444, Cys-447, Cys-462, and Cys-468. In terms of domain architecture, BRCT spans 733–817 (AEEGVLDGKT…LLKKPAGDQA (85 aa)).

This sequence belongs to the NAD-dependent DNA ligase family. LigA subfamily. The cofactor is Mg(2+). It depends on Mn(2+) as a cofactor.

The enzyme catalyses NAD(+) + (deoxyribonucleotide)n-3'-hydroxyl + 5'-phospho-(deoxyribonucleotide)m = (deoxyribonucleotide)n+m + AMP + beta-nicotinamide D-nucleotide.. Its function is as follows. DNA ligase that catalyzes the formation of phosphodiester linkages between 5'-phosphoryl and 3'-hydroxyl groups in double-stranded DNA using NAD as a coenzyme and as the energy source for the reaction. It is essential for DNA replication and repair of damaged DNA. This Ralstonia pickettii (strain 12J) protein is DNA ligase.